The chain runs to 38 residues: Large ribosomal subunit protein bL36 (38 aa).

This sequence belongs to the bacterial ribosomal protein bL36 family.

In Buchnera aphidicola subsp. Cinara cedri (strain Cc), this protein is Large ribosomal subunit protein bL36.